Reading from the N-terminus, the 97-residue chain is uncharacterized protein (97 aa).

This is an uncharacterized protein from Alcelaphine herpesvirus 1 (strain C500) (AlHV-1).